A 327-amino-acid polypeptide reads, in one-letter code: GTP 3',8-cyclase (327 aa).

The 213-residue stretch at 21–233 (SYGRRIRKLR…AKIQQKYSLK (213 aa)) folds into the Radical SAM core domain. GTP is bound at residue R30. Residues C37 and C41 each contribute to the [4Fe-4S] cluster site. Y43 is a binding site for S-adenosyl-L-methionine. C44 serves as a coordination point for [4Fe-4S] cluster. R79 provides a ligand contact to GTP. An S-adenosyl-L-methionine-binding site is contributed by G83. A GTP-binding site is contributed by T109. S-adenosyl-L-methionine is bound at residue S133. K169 is a binding site for GTP. M203 is an S-adenosyl-L-methionine binding site. 2 residues coordinate [4Fe-4S] cluster: C265 and C268. Residue 270 to 272 (RWR) coordinates GTP. C282 serves as a coordination point for [4Fe-4S] cluster.

It belongs to the radical SAM superfamily. MoaA family. Monomer and homodimer. [4Fe-4S] cluster is required as a cofactor.

It carries out the reaction GTP + AH2 + S-adenosyl-L-methionine = (8S)-3',8-cyclo-7,8-dihydroguanosine 5'-triphosphate + 5'-deoxyadenosine + L-methionine + A + H(+). The protein operates within cofactor biosynthesis; molybdopterin biosynthesis. Catalyzes the cyclization of GTP to (8S)-3',8-cyclo-7,8-dihydroguanosine 5'-triphosphate. This Synechocystis sp. (strain ATCC 27184 / PCC 6803 / Kazusa) protein is GTP 3',8-cyclase.